Reading from the N-terminus, the 308-residue chain is Follistatin-related protein 1 (308 aa).

The N-terminal stretch at 1–20 is a signal peptide; sequence MWKRWLALALALVAVAWVRA. Residues 30 to 53 form the Follistatin-like domain; that stretch reads ICANVFCGAGRECAVTEKGEPTCL. Disulfide bonds link cysteine 31–cysteine 42, cysteine 36–cysteine 52, cysteine 54–cysteine 84, cysteine 58–cysteine 77, and cysteine 66–cysteine 98. Residues 48-100 enclose the Kazal-like domain; that stretch reads GEPTCLCIEQCKPHKRPVCGSNGKTYLNHCELHRDACLTGSKIQVDYDGHCKE. Residue asparagine 144 is glycosylated (N-linked (GlcNAc...) asparagine). Residues 144–178 form the EF-hand 1 domain; sequence NYSEILDKYFKNFDNGDSRLDSSEFLKFVEQNETA. Phosphoserine is present on serine 165. Residues asparagine 175 and asparagine 180 are each glycosylated (N-linked (GlcNAc...) asparagine). An EF-hand 2 domain is found at 193 to 228; the sequence is LRGLCVDALIELSDENADWKLSFQEFLKCLNPSFNP. The VWFC domain maps to 233–287; sequence CALEDETYADGAETEVDCNRCVCACGNWVCTAMTCDGKNQKGAQTQTEEEMTRYV.

Homodimer. Interacts with SCN10A. Interacts with DIP2A; DIP2A may act as a cell surface receptor for FSTL1. Interacts with BMP4. Interacts with CD14; this interaction promotes TL4-mediated signaling cascade.

It is found in the secreted. In terms of biological role, secreted glycoprotein that is involved in various physiological processes, such as angiogenesis, regulation of the immune response, cell proliferation and differentiation. Plays a role in the development of the central nervous system, skeletal system, lungs, and ureter. Promotes endothelial cell survival, migration and differentiation into network structures in an AKT-dependent manner. Also promotes survival of cardiac myocytes. Initiates various signaling cascades by activating different receptors on the cell surface such as DIP2A, TLR4 or BMP receptors. This chain is Follistatin-related protein 1 (FSTL1), found in Macaca fascicularis (Crab-eating macaque).